The primary structure comprises 488 residues: Pup--protein ligase (488 aa).

Glutamate 33 provides a ligand contact to Mg(2+). Arginine 76 contributes to the ATP binding site. Tyrosine 78 is a binding site for Mg(2+). Aspartate 80 (proton acceptor) is an active-site residue. Glutamate 86 contributes to the Mg(2+) binding site. Threonine 89 and tryptophan 453 together coordinate ATP.

This sequence belongs to the Pup ligase/Pup deamidase family. Pup-conjugating enzyme subfamily.

The catalysed reaction is ATP + [prokaryotic ubiquitin-like protein]-L-glutamate + [protein]-L-lysine = ADP + phosphate + N(6)-([prokaryotic ubiquitin-like protein]-gamma-L-glutamyl)-[protein]-L-lysine.. It participates in protein degradation; proteasomal Pup-dependent pathway. The protein operates within protein modification; protein pupylation. Catalyzes the covalent attachment of the prokaryotic ubiquitin-like protein modifier Pup to the proteasomal substrate proteins, thereby targeting them for proteasomal degradation. This tagging system is termed pupylation. The ligation reaction involves the side-chain carboxylate of the C-terminal glutamate of Pup and the side-chain amino group of a substrate lysine. The polypeptide is Pup--protein ligase (Bifidobacterium adolescentis (strain ATCC 15703 / DSM 20083 / NCTC 11814 / E194a)).